Here is a 28-residue protein sequence, read N- to C-terminus: Expansin-B1 (28 aa).

One can recognise an Expansin-like CBD domain in the interval 11-28; it reads MLLSLQGPXSLRMVSESG.

It belongs to the expansin family. Expansin B subfamily.

It localises to the secreted. Its subcellular location is the cell wall. The protein resides in the membrane. May cause loosening and extension of plant cell walls by disrupting non-covalent bonding between cellulose microfibrils and matrix glucans. The chain is Expansin-B1 from Pseudotsuga menziesii (Douglas-fir).